A 266-amino-acid polypeptide reads, in one-letter code: 4-hydroxy-tetrahydrodipicolinate reductase (266 aa).

Residues 8-13 (GAAGRM) and glutamate 33 contribute to the NAD(+) site. Position 34 (arginine 34) interacts with NADP(+). NAD(+) is bound by residues 97–99 (GST) and 121–124 (APNM). Histidine 154 serves as the catalytic Proton donor/acceptor. A (S)-2,3,4,5-tetrahydrodipicolinate-binding site is contributed by histidine 155. Lysine 158 functions as the Proton donor in the catalytic mechanism. A (S)-2,3,4,5-tetrahydrodipicolinate-binding site is contributed by 164 to 165 (GT).

This sequence belongs to the DapB family.

The protein resides in the cytoplasm. The enzyme catalyses (S)-2,3,4,5-tetrahydrodipicolinate + NAD(+) + H2O = (2S,4S)-4-hydroxy-2,3,4,5-tetrahydrodipicolinate + NADH + H(+). It catalyses the reaction (S)-2,3,4,5-tetrahydrodipicolinate + NADP(+) + H2O = (2S,4S)-4-hydroxy-2,3,4,5-tetrahydrodipicolinate + NADPH + H(+). Its pathway is amino-acid biosynthesis; L-lysine biosynthesis via DAP pathway; (S)-tetrahydrodipicolinate from L-aspartate: step 4/4. Functionally, catalyzes the conversion of 4-hydroxy-tetrahydrodipicolinate (HTPA) to tetrahydrodipicolinate. This is 4-hydroxy-tetrahydrodipicolinate reductase from Geobacter metallireducens (strain ATCC 53774 / DSM 7210 / GS-15).